A 387-amino-acid chain; its full sequence is Monomeric sarcosine oxidase (387 aa).

6–36 (DVIVVGAGSMGMAAGYYLAKQGVKTLLVDSF) is a binding site for FAD. Cys316 is modified (S-8alpha-FAD cysteine).

This sequence belongs to the MSOX/MTOX family. MSOX subfamily. In terms of assembly, monomer. FAD serves as cofactor.

The protein localises to the cytoplasm. It carries out the reaction sarcosine + O2 + H2O = formaldehyde + glycine + H2O2. Functionally, catalyzes the oxidative demethylation of sarcosine. This is Monomeric sarcosine oxidase (soxA) from Bacillus sp. (strain NS-129).